The primary structure comprises 89 residues: Small ribosomal subunit protein uS15 (89 aa).

Basic and acidic residues predominate over residues 1–11 (MSITAERKAEV). Residues 1–24 (MSITAERKAEVIKTNAKKAGDTGS) are disordered.

It belongs to the universal ribosomal protein uS15 family. In terms of assembly, part of the 30S ribosomal subunit. Forms a bridge to the 50S subunit in the 70S ribosome, contacting the 23S rRNA.

One of the primary rRNA binding proteins, it binds directly to 16S rRNA where it helps nucleate assembly of the platform of the 30S subunit by binding and bridging several RNA helices of the 16S rRNA. In terms of biological role, forms an intersubunit bridge (bridge B4) with the 23S rRNA of the 50S subunit in the ribosome. This chain is Small ribosomal subunit protein uS15, found in Afipia carboxidovorans (strain ATCC 49405 / DSM 1227 / KCTC 32145 / OM5) (Oligotropha carboxidovorans).